Consider the following 111-residue polypeptide: Ferredoxin, 2Fe-2S (111 aa).

4 residues coordinate [2Fe-2S] cluster: cysteine 10, cysteine 23, cysteine 56, and cysteine 60.

In terms of assembly, homodimer in solution. The cofactor is [2Fe-2S] cluster.

In terms of biological role, ferredoxins are iron-sulfur proteins that transfer electrons in a wide variety of metabolic reactions. This is Ferredoxin, 2Fe-2S (fdx4) from Aquifex aeolicus (strain VF5).